The primary structure comprises 486 residues: dTDP-4-dehydro-6-deoxy-alpha-D-glucopyranose 2,3-dehydratase (486 aa).

Residues tryptophan 66, 149 to 153, serine 187, tryptophan 304, arginine 367, 383 to 385, 388 to 389, and 421 to 424 contribute to the dTDP-4-dehydro-6-deoxy-alpha-D-glucose site; these read TRSNY, QCS, NY, and EGGR.

This sequence belongs to the hexose 2,3-dehydratase family. Homodimer.

The enzyme catalyses dTDP-4-dehydro-6-deoxy-alpha-D-glucose = dTDP-3,4-didehydro-2,6-dideoxy-alpha-D-glucose + H2O. In terms of biological role, involved in the biosynthesis of forosamine ((4-dimethylamino)-2,3,4,6-tetradeoxy-alpha-D-threo-hexopyranose), a highly deoxygenated sugar component of several bioactive natural products such as the insecticidal spinosyns A and D. Catalyzes the removal of the hydroxyl group at position C-2 of the hexose ring of dTDP-4-dehydro-6-deoxy-alpha-D-glucopyranose, and the oxidation of the hydroxyl group at position C-3 to form a carbonyl functionality. The product of the reaction, dTDP-2,6-dideoxy-D-glycero-hex-2-enos-4-ulose, is a highly unstable diketosugar, which spontaneously forms dTDP-3,4-didehydro-2,6-dideoxy-alpha-D-glucose. This Saccharopolyspora spinosa protein is dTDP-4-dehydro-6-deoxy-alpha-D-glucopyranose 2,3-dehydratase.